The following is a 158-amino-acid chain: NKG2-F type II integral membrane protein (158 aa).

The span at 1 to 12 (MNKQRGTYSEVS) shows a compositional bias: polar residues. Positions 1–25 (MNKQRGTYSEVSLAQDPKRQQRKLK) are disordered. Topologically, residues 1-74 (MNKQRGTYSE…LPPPEKLTAE (74 aa)) are cytoplasmic. A helical; Signal-anchor for type II membrane protein membrane pass occupies residues 75 to 95 (VLGIICIVLMATVLKTIVLIP). Topologically, residues 96 to 158 (CIGVLEQNNF…VLRRTLICFL (63 aa)) are extracellular.

In terms of assembly, can form disulfide-bonded heterodimer with CD94. Natural killer cells.

Its subcellular location is the membrane. In terms of biological role, may play a role as a receptor for the recognition of MHC class I HLA-E molecules by NK cells. The chain is NKG2-F type II integral membrane protein (KLRC4) from Homo sapiens (Human).